The sequence spans 391 residues: Succinyl-diaminopimelate desuccinylase (391 aa).

His-67 contacts Zn(2+). Asp-69 is a catalytic residue. Residue Asp-101 participates in Zn(2+) binding. Glu-135 acts as the Proton acceptor in catalysis. Zn(2+) is bound by residues Glu-136, Glu-164, and His-353.

It belongs to the peptidase M20A family. DapE subfamily. As to quaternary structure, homodimer. Zn(2+) serves as cofactor. It depends on Co(2+) as a cofactor.

The catalysed reaction is N-succinyl-(2S,6S)-2,6-diaminopimelate + H2O = (2S,6S)-2,6-diaminopimelate + succinate. It functions in the pathway amino-acid biosynthesis; L-lysine biosynthesis via DAP pathway; LL-2,6-diaminopimelate from (S)-tetrahydrodipicolinate (succinylase route): step 3/3. Its function is as follows. Catalyzes the hydrolysis of N-succinyl-L,L-diaminopimelic acid (SDAP), forming succinate and LL-2,6-diaminopimelate (DAP), an intermediate involved in the bacterial biosynthesis of lysine and meso-diaminopimelic acid, an essential component of bacterial cell walls. The protein is Succinyl-diaminopimelate desuccinylase of Rickettsia bellii (strain OSU 85-389).